A 429-amino-acid polypeptide reads, in one-letter code: Glutamate-1-semialdehyde 2,1-aminomutase 1 (429 aa).

K268 is subject to N6-(pyridoxal phosphate)lysine.

The protein belongs to the class-III pyridoxal-phosphate-dependent aminotransferase family. HemL subfamily. In terms of assembly, homodimer. The cofactor is pyridoxal 5'-phosphate.

Its subcellular location is the cytoplasm. It catalyses the reaction (S)-4-amino-5-oxopentanoate = 5-aminolevulinate. It participates in porphyrin-containing compound metabolism; protoporphyrin-IX biosynthesis; 5-aminolevulinate from L-glutamyl-tRNA(Glu): step 2/2. In Staphylococcus haemolyticus (strain JCSC1435), this protein is Glutamate-1-semialdehyde 2,1-aminomutase 1.